A 48-amino-acid polypeptide reads, in one-letter code: Large ribosomal subunit protein bL36c (48 aa).

This sequence belongs to the bacterial ribosomal protein bL36 family.

It localises to the plastid. The protein resides in the chloroplast. In Rhodomonas salina (Cryptomonas salina), this protein is Large ribosomal subunit protein bL36c.